The chain runs to 438 residues: ATP-dependent RNA helicase RhlB (438 aa).

Positions 9–37 (QRFADLPLHPEVKQALAENGFEFCTPIQA) match the Q motif motif. In terms of domain architecture, Helicase ATP-binding spans 40-219 (LPVLLQSKDI…YDHMNEPVKV (180 aa)). An ATP-binding site is contributed by 53-60 (AQTGTGKT). Positions 165–168 (DEAD) match the DEAD box motif. The Helicase C-terminal domain maps to 243–390 (KMRLLLTLIE…VSNYDSEALL (148 aa)). The segment at 395–438 (TPAKIHRKHPSGTRNLRDRSGTSRPGAQRSGARPPRHDRTRRHS) is disordered. The span at 428–438 (PPRHDRTRRHS) shows a compositional bias: basic residues.

The protein belongs to the DEAD box helicase family. RhlB subfamily. As to quaternary structure, component of the RNA degradosome, which is a multiprotein complex involved in RNA processing and mRNA degradation.

Its subcellular location is the cytoplasm. The enzyme catalyses ATP + H2O = ADP + phosphate + H(+). DEAD-box RNA helicase involved in RNA degradation. Has RNA-dependent ATPase activity and unwinds double-stranded RNA. This is ATP-dependent RNA helicase RhlB from Shewanella baltica (strain OS223).